The following is a 187-amino-acid chain: Flavin-dependent monooxygenase, reductase subunit HsaB (187 aa).

Residues 32-36 (PVGFA), 38-39 (QS), 53-55 (CPT), 59-60 (RS), and 85-86 (RF) each bind FAD. 152–155 (FYRG) provides a ligand contact to NAD(+).

It belongs to the non-flavoprotein flavin reductase family. In terms of assembly, hsaAB monooxygenase consists of an oxygenase component HsaA and a reductase component HsaB.

It catalyses the reaction a reduced flavin + NAD(+) = an oxidized flavin + NADH + 2 H(+). It participates in lipid metabolism; steroid biosynthesis. Functionally, catalyzes the reduction of free flavins (FMN or FAD) by NADH. Subsequently, the reduced flavins diffuse to the HsaA oxygenase subunit. The protein is Flavin-dependent monooxygenase, reductase subunit HsaB (hsaB) of Mycobacterium tuberculosis (strain CDC 1551 / Oshkosh).